A 64-amino-acid chain; its full sequence is Phylloxin-B1 (64 aa).

Positions 1 to 22 (MVFLKKSLLLVLFVGLVSLSIC) are cleaved as a signal peptide. Residues 23 to 42 (EENKREEHEEIEENKEKAEE) constitute a propeptide that is removed on maturation. At Gln-63 the chain carries Glutamine amide.

In terms of tissue distribution, expressed by the skin glands.

It is found in the secreted. In terms of biological role, antimicrobial peptide against the wall-less bacteria A.laidlawii and S.melliferum, the Gram-positive bacteria B.megaterium KM, C.glutamicum ATCC 27853 and M.luteus ATCC 27853 and the Gram-negative-bacteria R.meliloti 102F34 and E.coli K12. This is Phylloxin-B1 from Phyllomedusa bicolor (Two-colored leaf frog).